Reading from the N-terminus, the 159-residue chain is MIRIGQGFDVHQLTEGRPLLLGGVHIPHPKGLLGHSDADVLLHTITDAALGAIGAGDLGKHFPDTDEAFKDADSKHLLSQAWQLVKNAGYTLGNVDCTVMAQKPKLAPYIEAMRKQIAELLETDVANVSVKATTTETLGFVGREEGIAAQAVILLQKAE.

Residues Asp9 and His11 each contribute to the a divalent metal cation site. Residues 9 to 11 and 35 to 36 contribute to the 4-CDP-2-C-methyl-D-erythritol 2-phosphate site; these read DVH and HS. Residue His43 participates in a divalent metal cation binding. 4-CDP-2-C-methyl-D-erythritol 2-phosphate is bound by residues 57 to 59, 62 to 66, 133 to 136, Phe140, and Arg143; these read DLG, FPDTD, and TTTE.

The protein belongs to the IspF family. Homotrimer. The cofactor is a divalent metal cation.

The catalysed reaction is 4-CDP-2-C-methyl-D-erythritol 2-phosphate = 2-C-methyl-D-erythritol 2,4-cyclic diphosphate + CMP. Its pathway is isoprenoid biosynthesis; isopentenyl diphosphate biosynthesis via DXP pathway; isopentenyl diphosphate from 1-deoxy-D-xylulose 5-phosphate: step 4/6. In terms of biological role, involved in the biosynthesis of isopentenyl diphosphate (IPP) and dimethylallyl diphosphate (DMAPP), two major building blocks of isoprenoid compounds. Catalyzes the conversion of 4-diphosphocytidyl-2-C-methyl-D-erythritol 2-phosphate (CDP-ME2P) to 2-C-methyl-D-erythritol 2,4-cyclodiphosphate (ME-CPP) with a corresponding release of cytidine 5-monophosphate (CMP). The protein is 2-C-methyl-D-erythritol 2,4-cyclodiphosphate synthase of Shouchella clausii (strain KSM-K16) (Alkalihalobacillus clausii).